The primary structure comprises 1703 residues: Gingipain R1 (1703 aa).

Residues 1–20 (MNKFVSIALCSSLLGGMAFA) form the signal peptide. Residues 21 to 224 (QQTELGRNPN…RMFMNYEPGR (204 aa)) constitute a propeptide that is removed on maturation. Residues Asp-302, Val-324, Asp-327, Tyr-329, Glu-331, Glu-385, and His-390 each coordinate Ca(2+). The active-site Proton donor is the His-435. Cys-468 functions as the Nucleophile in the catalytic mechanism. Residues Phe-473, Glu-482, Asp-516, Glu-517, Glu-520, and His-526 each coordinate Ca(2+). The interval 940–968 (WDAPNGTPNPNPNPNPNPNPGTTTLSESF) is disordered. Pro residues predominate over residues 946–958 (TPNPNPNPNPNPN).

It belongs to the peptidase C25 family.

The protein localises to the secreted. The catalysed reaction is Hydrolysis of proteins and small molecule substrates, with a preference for Arg in P1.. Functionally, thiol protease. Acts synergistically with RgpB to catalyze the maturation of fimbrial subunits, such as FimA. Its proteolytic activity is a major factor in both periodontal tissue destruction and in evasion of host defense mechanisms. The chain is Gingipain R1 from Porphyromonas gingivalis (strain ATCC 33277 / DSM 20709 / CIP 103683 / JCM 12257 / NCTC 11834 / 2561).